Consider the following 590-residue polypeptide: Cytidine monophosphate-N-acetylneuraminic acid hydroxylase (590 aa).

A Rieske domain is found at 14–112; the sequence is LSPVEVASLK…VEMDENNRLL (99 aa). Cys-54, His-56, Cys-75, and His-78 together coordinate [2Fe-2S] cluster.

Belongs to the CMP-Neu5Ac hydroxylase family. It depends on [2Fe-2S] cluster as a cofactor.

Its subcellular location is the cytoplasm. It catalyses the reaction CMP-N-acetyl-beta-neuraminate + 2 Fe(II)-[cytochrome b5] + O2 + 2 H(+) = CMP-N-glycoloyl-beta-neuraminate + 2 Fe(III)-[cytochrome b5] + H2O. The protein operates within amino-sugar metabolism; N-acetylneuraminate metabolism. Functionally, sialic acids are components of carbohydrate chains of glycoconjugates and are involved in cell-cell recognition and cell-pathogen interactions. Catalyzes the conversion of CMP-N-acetylneuraminic acid (CMP-Neu5Ac) into its hydroxylated derivative CMP-N-glycolylneuraminic acid (CMP-Neu5Gc), a sialic acid abundantly expressed at the surface of many cells. This is Cytidine monophosphate-N-acetylneuraminic acid hydroxylase from Pan troglodytes (Chimpanzee).